Here is a 365-residue protein sequence, read N- to C-terminus: Histidinol-phosphate aminotransferase (365 aa).

Lys227 carries the N6-(pyridoxal phosphate)lysine modification.

It belongs to the class-II pyridoxal-phosphate-dependent aminotransferase family. Histidinol-phosphate aminotransferase subfamily. In terms of assembly, homodimer. Pyridoxal 5'-phosphate is required as a cofactor.

It carries out the reaction L-histidinol phosphate + 2-oxoglutarate = 3-(imidazol-4-yl)-2-oxopropyl phosphate + L-glutamate. It participates in amino-acid biosynthesis; L-histidine biosynthesis; L-histidine from 5-phospho-alpha-D-ribose 1-diphosphate: step 7/9. This chain is Histidinol-phosphate aminotransferase, found in Campylobacter concisus (strain 13826).